A 498-amino-acid polypeptide reads, in one-letter code: ATP synthase subunit beta, chloroplastic (498 aa).

G172 to T179 contributes to the ATP binding site.

The protein belongs to the ATPase alpha/beta chains family. F-type ATPases have 2 components, CF(1) - the catalytic core - and CF(0) - the membrane proton channel. CF(1) has five subunits: alpha(3), beta(3), gamma(1), delta(1), epsilon(1). CF(0) has four main subunits: a(1), b(1), b'(1) and c(9-12).

Its subcellular location is the plastid. The protein resides in the chloroplast thylakoid membrane. The catalysed reaction is ATP + H2O + 4 H(+)(in) = ADP + phosphate + 5 H(+)(out). Produces ATP from ADP in the presence of a proton gradient across the membrane. The catalytic sites are hosted primarily by the beta subunits. In Nandina domestica (Heavenly bamboo), this protein is ATP synthase subunit beta, chloroplastic.